The primary structure comprises 92 residues: UPF0358 protein Exig_1994 (92 aa).

The protein belongs to the UPF0358 family.

This Exiguobacterium sibiricum (strain DSM 17290 / CCUG 55495 / CIP 109462 / JCM 13490 / 255-15) protein is UPF0358 protein Exig_1994.